Consider the following 282-residue polypeptide: Pantothenate synthetase (282 aa).

30-37 (MGNLHEGH) is an ATP binding site. Histidine 37 functions as the Proton donor in the catalytic mechanism. Residue glutamine 61 coordinates (R)-pantoate. A beta-alanine-binding site is contributed by glutamine 61. 148 to 151 (GQKD) is a binding site for ATP. Glutamine 154 contributes to the (R)-pantoate binding site. Residues valine 177 and 185–188 (LSSR) each bind ATP.

It belongs to the pantothenate synthetase family. Homodimer.

The protein resides in the cytoplasm. It catalyses the reaction (R)-pantoate + beta-alanine + ATP = (R)-pantothenate + AMP + diphosphate + H(+). The protein operates within cofactor biosynthesis; (R)-pantothenate biosynthesis; (R)-pantothenate from (R)-pantoate and beta-alanine: step 1/1. Functionally, catalyzes the condensation of pantoate with beta-alanine in an ATP-dependent reaction via a pantoyl-adenylate intermediate. The polypeptide is Pantothenate synthetase (Acinetobacter baumannii (strain AB0057)).